The primary structure comprises 370 residues: MADPRDLQLSAYDYELPEARIAQRPVEPRHAAKLLMVPPLEASSLQGRHGTVWDWQNELRSGDLLVVNDTRVLQARLRVRRSGGGLGELLVLEPRGEGRWLCLARPGKKLRPGDQVWLEALEQDPLPLQVLASDPASGGRIVQFPPAFVDAMAIEALLQRYGEVPLPPYITCHDDSDQERYQTRYASRPGAVAAPTAGLHLSDDLLQAIRARGVQMSSVTLHVGLGTFRPVETEDLSELSLHSEWVEVSTQLVEAVQACRQRGGRVIAVGTTSVRALEGAAAAGGGDLQPLKGPVDLVIQPGYQFRVVDGLLTNFHLPKSSLLLLVSALIGRERLLDLYALAIANDYRFYSYGDAMWIAPGAVLMDARPR.

It belongs to the QueA family. In terms of assembly, monomer.

It localises to the cytoplasm. The enzyme catalyses 7-aminomethyl-7-carbaguanosine(34) in tRNA + S-adenosyl-L-methionine = epoxyqueuosine(34) in tRNA + adenine + L-methionine + 2 H(+). It functions in the pathway tRNA modification; tRNA-queuosine biosynthesis. Functionally, transfers and isomerizes the ribose moiety from AdoMet to the 7-aminomethyl group of 7-deazaguanine (preQ1-tRNA) to give epoxyqueuosine (oQ-tRNA). This Synechococcus sp. (strain WH7803) protein is S-adenosylmethionine:tRNA ribosyltransferase-isomerase.